Here is a 447-residue protein sequence, read N- to C-terminus: Serine/threonine-protein phosphatase 2A 55 kDa regulatory subunit B gamma isoform (447 aa).

7 WD repeats span residues 22-61 (TEADVISTVEFNHTGELLATGDKGGRVVIFQREPESKNAP), 87-128 (EIEE…KRPE), 171-209 (GHTYHINSISVNSDCETYMSADDLRINLWHLAITDRSFN), 220-260 (DLTE…LCDK), 279-317 (EIISSVSDVKFSHSGRYMLTRDYLTVKVWDLNMEARPIE), 334-375 (ESDC…DVTL), and 410-446 (DFTKKILHTAWHPAENIIAIAATNNLYIFQDKVNSDM).

The protein belongs to the phosphatase 2A regulatory subunit B family. In terms of assembly, PP2A consists of a common heterodimeric core enzyme, composed of a 36 kDa catalytic subunit (subunit C) and a 65 kDa constant regulatory subunit (PR65 or subunit A), that associates with a variety of regulatory subunits. Proteins that associate with the core dimer include three families of regulatory subunits B (the R2/B/PR55/B55, R3/B''/PR72/PR130/PR59 and R5/B'/B56 families), the 48 kDa variable regulatory subunit, viral proteins, and cell signaling molecules. Interacts with IER5. Highly expressed in brain.

In terms of biological role, the B regulatory subunit might modulate substrate selectivity and catalytic activity, and might also direct the localization of the catalytic enzyme to a particular subcellular compartment. The polypeptide is Serine/threonine-protein phosphatase 2A 55 kDa regulatory subunit B gamma isoform (Ppp2r2c) (Rattus norvegicus (Rat)).